The following is a 279-amino-acid chain: Putative Delta(7)-sterol-C5(6)-desaturase 2 (279 aa).

2 helical membrane-spanning segments follow: residues 48–68 (LAGN…IYYL) and 127–147 (FLCF…IYWV). Residues 134-263 (ALYLVLVEFM…TIWMDWMFGS (130 aa)) enclose the Fatty acid hydroxylase domain. The Histidine box-1 signature appears at 148–152 (HKELH). A Histidine box-2 motif is present at residues 162-166 (HATHH). A helical membrane pass occupies residues 194-214 (HVIALFIVPIHLITHLSLLFL). The Histidine box-3 motif lies at 239-243 (HTIHH).

Belongs to the sterol desaturase family. Fe cation serves as cofactor.

Its subcellular location is the endoplasmic reticulum membrane. The enzyme catalyses a Delta(7)-sterol + 2 Fe(II)-[cytochrome b5] + O2 + 2 H(+) = a Delta(5),Delta(7)-sterol + 2 Fe(III)-[cytochrome b5] + 2 H2O. The protein is Putative Delta(7)-sterol-C5(6)-desaturase 2 (HDF7) of Arabidopsis thaliana (Mouse-ear cress).